Here is a 233-residue protein sequence, read N- to C-terminus: Small ribosomal subunit protein uS2 (233 aa).

Belongs to the universal ribosomal protein uS2 family.

This Bacillus mycoides (strain KBAB4) (Bacillus weihenstephanensis) protein is Small ribosomal subunit protein uS2.